The primary structure comprises 329 residues: MSSDRTSVVVSKRDAGGFEYPFAASCHPGREVTEQRTLAWVRRLRLVPDGRSLSRLKATNFSHLAAWLLPSASTQTLQLASDFTAVLFLLDDAYDEGQLSTDPESVEWLNEKYLGELFGYTEADMSDPLTRGMLDVRERIRRSHPHFFLNRWLSHFQYYYEANLWEANNRKQMRVPHLEEYLMMRRYSGAVYTYCDLLELLLERPLPLEVVQHPLIQTVRDICNDILCWTNDYFSLGKELTNGETHNLIVVLRNECVSTLEEAIDRLKDMHDRRVAEYQGVKEKVLALWADDEIRLYLDAVEAMIAGNQRWALEAGRYSGLESLIVRAG.

Mg(2+) contacts are provided by Asp91 and Glu96. The DDXXD motif signature appears at 91 to 95 (DDAYD). Arg185 lines the substrate pocket. 2 residues coordinate Mg(2+): Asn231 and Ser235. A substrate-binding site is contributed by Lys238. Residue Glu239 participates in Mg(2+) binding. 317-318 (RY) serves as a coordination point for substrate.

The protein belongs to the terpene synthase family. Mg(2+) is required as a cofactor.

It carries out the reaction (2E,6E)-farnesyl diphosphate = (+)-eremophilene + diphosphate. Its pathway is secondary metabolite biosynthesis; terpenoid biosynthesis. Catalyzes the conversion of (2E,6E)-farnesyl diphosphate (FPP) to yield the bicyclic sesquiterpene eremophilene via a 1,10-cyclization, which requires the abstraction of the pyrophosphate from FPP to yield the (E,E)-germacradienyl cation. The only accepted substrate is farnesyl diphosphate (FPP). The protein is (+)-eremophilene synthase of Sorangium cellulosum (strain So ce56) (Polyangium cellulosum (strain So ce56)).